A 528-amino-acid chain; its full sequence is Peptide chain release factor 3 (528 aa).

A tr-type G domain is found at 11 to 279 (NKRRTFAIIS…GIVEWAPKPL (269 aa)). GTP-binding positions include 20-27 (SHPDAGKT), 88-92 (DTPGH), and 142-145 (NKLD).

The protein belongs to the TRAFAC class translation factor GTPase superfamily. Classic translation factor GTPase family. PrfC subfamily.

The protein resides in the cytoplasm. Functionally, increases the formation of ribosomal termination complexes and stimulates activities of RF-1 and RF-2. It binds guanine nucleotides and has strong preference for UGA stop codons. It may interact directly with the ribosome. The stimulation of RF-1 and RF-2 is significantly reduced by GTP and GDP, but not by GMP. The sequence is that of Peptide chain release factor 3 from Shewanella sp. (strain W3-18-1).